The chain runs to 247 residues: 23S rRNA (guanosine-2'-O-)-methyltransferase RlmB (247 aa).

Residues Gly197, Ile217, and Leu226 each coordinate S-adenosyl-L-methionine.

It belongs to the class IV-like SAM-binding methyltransferase superfamily. RNA methyltransferase TrmH family. RlmB subfamily.

The protein localises to the cytoplasm. It catalyses the reaction guanosine(2251) in 23S rRNA + S-adenosyl-L-methionine = 2'-O-methylguanosine(2251) in 23S rRNA + S-adenosyl-L-homocysteine + H(+). Functionally, specifically methylates the ribose of guanosine 2251 in 23S rRNA. This Vibrio vulnificus (strain CMCP6) protein is 23S rRNA (guanosine-2'-O-)-methyltransferase RlmB.